The primary structure comprises 627 residues: Hemocyanin D chain (627 aa).

Cu cation is bound by residues His171, His175, His202, His322, His326, and His362. Asn445 carries an N-linked (GlcNAc...) asparagine glycan. The cysteines at positions 531 and 579 are disulfide-linked.

This sequence belongs to the tyrosinase family. Hemocyanin subfamily. As to quaternary structure, tarantula hemocyanin is a 24-chain polymer with seven different chains identified. Hemolymph.

The protein localises to the secreted. The protein resides in the extracellular space. Hemocyanins are copper-containing oxygen carriers occurring freely dissolved in the hemolymph of many mollusks and arthropods. The protein is Hemocyanin D chain (HCD) of Aphonopelma sp. (American tarantula).